A 462-amino-acid chain; its full sequence is Glycoprotein endo-alpha-1,2-mannosidase (462 aa).

The Cytoplasmic portion of the chain corresponds to 1–8; that stretch reads MAKFRRRT. The chain crosses the membrane as a helical; Signal-anchor for type II membrane protein span at residues 9–29; sequence CIILALFILFIFSLMMGLKML. Topologically, residues 30–462 are lumenal; that stretch reads RPNTATFGAP…YALDRQLPVS (433 aa). A catalytic region spans residues 60 to 462; sequence DFQKSDRINS…YALDRQLPVS (403 aa).

The protein belongs to the glycosyl hydrolase 99 family. Undergoes proteolytic cleavage in the C-terminal region. Highly expressed in the liver and kidney. Expressed at lower levels in muscle, pancreas, heart, placenta, lung and brain.

Its subcellular location is the golgi apparatus membrane. The catalysed reaction is N-{alpha-Glc-(1-&gt;3)-alpha-Man-(1-&gt;2)-alpha-Man-(1-&gt;2)-alpha-Man-(1-&gt;3)-[alpha-Man-(1-&gt;2)-alpha-Man-(1-&gt;3)-[alpha-Man-(1-&gt;2)-alpha-Man-(1-&gt;6)]-alpha-Man-(1-&gt;6)]-beta-Man-(1-&gt;4)-beta-GlcNAc-(1-&gt;4)-beta-GlcNAc}-L-asparaginyl-[protein] + H2O = alpha-D-glucosyl-(1-&gt;3)-D-mannopyranose + N(4)-{alpha-D-Man-(1-&gt;2)-alpha-D-Man-(1-&gt;3)-[alpha-D-Man-(1-&gt;2)-alpha-D-Man-(1-&gt;3)-[alpha-D-Man-(1-&gt;2)-alpha-D-Man-(1-&gt;6)]-alpha-D-Man-(1-&gt;6)]-beta-D-Man-(1-&gt;4)-beta-D-GlaNAc-(1-&gt;4)-beta-D-GlcNAc}-L-asparaginyl-[protein] (N-glucan mannose isomer 8A1,2,3B1,2). The chain is Glycoprotein endo-alpha-1,2-mannosidase (MANEA) from Homo sapiens (Human).